The chain runs to 310 residues: Dicarboxylate carrier UCP2 (310 aa).

At 1-10 the chain is on the mitochondrial intermembrane side; the sequence is MVGFRAGDVP. Residues 11 to 32 traverse the membrane as a helical segment; sequence PTATVKFIGAGTAACIADLFTF. Solcar repeat units follow at residues 11–107, 115–204, and 213–298; these read PTAT…VKQF, AGIG…IKDA, and DDLP…LKRA. Residues 33–78 are Mitochondrial matrix-facing; sequence PLDTAKVRLQIQGENKASTNMGRGPVKYRGVFGTISTMVRVEGPRS. A helical transmembrane segment spans residues 79 to 101; that stretch reads LYSGLVAGLQRQMSFASVRIGLY. The Mitochondrial intermembrane segment spans residues 102–120; sequence DSVKQFYTKGSDHAGIGSR. A helical membrane pass occupies residues 121 to 137; it reads LMAGCTTGAMAVAVAQP. The Mitochondrial matrix segment spans residues 138–181; the sequence is TDVLKVRFQAQVSAGASKRYHSTMDAYRTIAKEEGFRGLWKGTG. Residues 182 to 198 form a helical membrane-spanning segment; that stretch reads PNITRNAIVNCTELVTY. The Mitochondrial intermembrane portion of the chain corresponds to 199-215; that stretch reads DLIKDALLKSSLMTDDL. Residues 216 to 235 traverse the membrane as a helical segment; sequence PCHFTSAFGAGFCTTIIASP. Topologically, residues 236–269 are mitochondrial matrix; that stretch reads VDVVKTRYMNSAQGQYSSALNCAVAMLTKKGPKA. Residues 270–292 form a helical membrane-spanning segment; sequence FFKGFMPSFLRLGSWNVVMFVTY. The interval 277 to 299 is purine nucleotide binding; sequence SFLRLGSWNVVMFVTYEQLKRAM. Residues 293-310 are Mitochondrial intermembrane-facing; the sequence is EQLKRAMMAARQNWHTPL.

The protein belongs to the mitochondrial carrier (TC 2.A.29) family. Homotetramer. Adopts an asymmetrical dimer of dimers functional form.

The protein resides in the mitochondrion inner membrane. The catalysed reaction is L-aspartate(out) + phosphate(in) + H(+)(in) = L-aspartate(in) + phosphate(out) + H(+)(out). The enzyme catalyses oxaloacetate(out) + phosphate(in) + H(+)(in) = oxaloacetate(in) + phosphate(out) + H(+)(out). It catalyses the reaction (S)-malate(out) + phosphate(in) + H(+)(in) = (S)-malate(in) + phosphate(out) + H(+)(out). It carries out the reaction malonate(out) + phosphate(in) + H(+)(in) = malonate(in) + phosphate(out) + H(+)(out). The catalysed reaction is sulfate(out) + phosphate(in) + H(+)(in) = sulfate(in) + phosphate(out) + H(+)(out). The enzyme catalyses (S)-malate(out) = (S)-malate(in). It catalyses the reaction L-aspartate(out) = L-aspartate(in). It carries out the reaction phosphate(in) = phosphate(out). The catalysed reaction is chloride(in) = chloride(out). The enzyme catalyses H(+)(in) = H(+)(out). It catalyses the reaction a long-chain fatty acid(out) = a long-chain fatty acid(in). Its function is as follows. UCP are mitochondrial transporter proteins that create proton leaks across the inner mitochondrial membrane, thus uncoupling oxidative phosphorylation from ATP synthesis. As a result, energy is dissipated in the form of heat. Antiporter that exports dicarboxylate intermediates of the Krebs cycle in exchange for phosphate plus a proton across the inner membrane of mitochondria, a process driven by mitochondrial motive force with an overall impact on glycolysis, glutaminolysis and glutathione-dependent redox balance. Continuous export of oxaloacetate and related four-carbon dicarboxylates from mitochondrial matrix into the cytosol negatively regulates the oxidation of acetyl-CoA substrates via the Krebs cycle, lowering the ATP/ADP ratio and reactive oxygen species (ROS) production. May mediate inducible proton entry into the mitochondrial matrix affecting ATP turnover as a protection mechanism against oxidative stress. The proton currents are most likely associated with fatty acid flipping across the inner membrane of mitochondria in a metabolic process regulated by free fatty acids and purine nucleotides. This chain is Dicarboxylate carrier UCP2 (ucp2), found in Danio rerio (Zebrafish).